The primary structure comprises 369 residues: tRNA-specific 2-thiouridylase MnmA (369 aa).

Residues 12–19 and methionine 38 contribute to the ATP site; that span reads GMSGGVDS. Positions 98-100 are interaction with target base in tRNA; the sequence is NPD. Cysteine 103 acts as the Nucleophile in catalysis. A disulfide bridge links cysteine 103 with cysteine 200. Glycine 128 provides a ligand contact to ATP. The segment at 150 to 152 is interaction with tRNA; the sequence is KDQ. Residue cysteine 200 is the Cysteine persulfide intermediate of the active site. The segment at 312–313 is interaction with tRNA; sequence RY.

It belongs to the MnmA/TRMU family.

It is found in the cytoplasm. It catalyses the reaction S-sulfanyl-L-cysteinyl-[protein] + uridine(34) in tRNA + AH2 + ATP = 2-thiouridine(34) in tRNA + L-cysteinyl-[protein] + A + AMP + diphosphate + H(+). In terms of biological role, catalyzes the 2-thiolation of uridine at the wobble position (U34) of tRNA, leading to the formation of s(2)U34. This is tRNA-specific 2-thiouridylase MnmA from Tolumonas auensis (strain DSM 9187 / NBRC 110442 / TA 4).